Reading from the N-terminus, the 346-residue chain is Protein RecA (346 aa).

An ATP-binding site is contributed by Gly-65–Thr-72.

It belongs to the RecA family.

Its subcellular location is the cytoplasm. Can catalyze the hydrolysis of ATP in the presence of single-stranded DNA, the ATP-dependent uptake of single-stranded DNA by duplex DNA, and the ATP-dependent hybridization of homologous single-stranded DNAs. It interacts with LexA causing its activation and leading to its autocatalytic cleavage. The polypeptide is Protein RecA (Enterococcus hirae (strain ATCC 9790 / DSM 20160 / JCM 8729 / LMG 6399 / NBRC 3181 / NCIMB 6459 / NCDO 1258 / NCTC 12367 / WDCM 00089 / R)).